The sequence spans 637 residues: tRNA uridine 5-carboxymethylaminomethyl modification enzyme MnmG (637 aa).

FAD is bound by residues 15-20 (GAGHAG), Ile-127, and Ser-182. An NAD(+)-binding site is contributed by 276–290 (GPRYCPSIEDKIVRF). Gln-373 is a binding site for FAD.

Belongs to the MnmG family. In terms of assembly, homodimer. Heterotetramer of two MnmE and two MnmG subunits. FAD serves as cofactor.

The protein localises to the cytoplasm. Its function is as follows. NAD-binding protein involved in the addition of a carboxymethylaminomethyl (cmnm) group at the wobble position (U34) of certain tRNAs, forming tRNA-cmnm(5)s(2)U34. In Streptococcus pneumoniae serotype 4 (strain ATCC BAA-334 / TIGR4), this protein is tRNA uridine 5-carboxymethylaminomethyl modification enzyme MnmG.